We begin with the raw amino-acid sequence, 529 residues long: Autoinducer-2 kinase (529 aa).

It belongs to the FGGY kinase family.

It is found in the cytoplasm. It carries out the reaction (S)-4,5-dihydroxypentane-2,3-dione + ATP = (2S)-2-hydroxy-3,4-dioxopentyl phosphate + ADP + H(+). Functionally, catalyzes the phosphorylation of autoinducer-2 (AI-2) to phospho-AI-2, which subsequently inactivates the transcriptional regulator LsrR and leads to the transcription of the lsr operon. Phosphorylates the ring-open form of (S)-4,5-dihydroxypentane-2,3-dione (DPD), which is the precursor to all AI-2 signaling molecules, at the C5 position. This chain is Autoinducer-2 kinase, found in Yersinia enterocolitica serotype O:8 / biotype 1B (strain NCTC 13174 / 8081).